The primary structure comprises 587 residues: Deoxynucleoside triphosphate triphosphohydrolase sahd-1 (587 aa).

One can recognise an HD domain in the interval 92-262 (RFVHSLGTFS…GHDVDKMDYL (171 aa)). Zn(2+) is bound by residues His-95, His-134, Asp-135, and Asp-257. Residues 554 to 587 (EKFLTPRKRSPQDSPDEVSSSCSTAKRRLEFGSS) form a disordered region. The residue at position 558 (Thr-558) is a Phosphothreonine.

It belongs to the SAMHD1 family. In terms of assembly, homodimer. Homotetramer; in dGTP-bound form. Requires Zn(2+) as cofactor.

It is found in the nucleus. The protein resides in the chromosome. It catalyses the reaction a 2'-deoxyribonucleoside 5'-triphosphate + H2O = a 2'-deoxyribonucleoside + triphosphate + H(+). Allosterically activated and regulated by GTP or dGTP. Allosteric activation promotes the formation of highly active homotetramers. Phosphorylation impairs homotetramerization, thereby inhibiting dNTPase activity. Its function is as follows. Has deoxynucleoside triphosphate (dNTPase) activity. dNTPase activity acts as a regulator of DNA precursor pools by regulating dNTP pools. Phosphorylation acts as a switch to control dNTPase-dependent and -independent functions. The polypeptide is Deoxynucleoside triphosphate triphosphohydrolase sahd-1 (Caenorhabditis elegans).